Reading from the N-terminus, the 259-residue chain is MATATGVAEERLLAALAYLQCAVGCAVFARNRQTNSVYGRHALPSHRLRVPARAAWVVQELPSLALPLYQYASESAPRLRSAPNCILLAMFLVHYGHRCLIYPFLMRGGKPMPLLACTMAIMFCTCNGYLQSRYLSHCAVYADDWVTDPRFLIGFGLWLTGMLINIHSDHILRNLRKPGDTGYKIPRGGLFEYVTAANYFGEIMEWCGYALASWSVQGAAFAFFTFCFLSGRAKEHHEWYLRKFEEYPKFRKIIIPFLF.

5 consecutive transmembrane segments (helical) span residues L12–A29, I86–M106, P111–Q131, F151–I171, and Y209–L229.

This sequence belongs to the steroid 5-alpha reductase family. As to expression, liver and prostate (at a low level).

The protein localises to the microsome membrane. Its subcellular location is the endoplasmic reticulum membrane. It carries out the reaction a 3-oxo-5alpha-steroid + NADP(+) = a 3-oxo-Delta(4)-steroid + NADPH + H(+). The enzyme catalyses androst-4-ene-3,17-dione + NADPH + H(+) = 5alpha-androstan-3,17-dione + NADP(+). It catalyses the reaction 5alpha-pregnane-3,20-dione + NADP(+) = progesterone + NADPH + H(+). The catalysed reaction is 17beta-hydroxy-5alpha-androstan-3-one + NADP(+) = testosterone + NADPH + H(+). In terms of biological role, converts testosterone into 5-alpha-dihydrotestosterone and progesterone or corticosterone into their corresponding 5-alpha-3-oxosteroids. It plays a central role in sexual differentiation and androgen physiology. The protein is 3-oxo-5-alpha-steroid 4-dehydrogenase 1 of Homo sapiens (Human).